Here is a 123-residue protein sequence, read N- to C-terminus: uncharacterized protein (123 aa).

This is an uncharacterized protein from Pasteurella multocida (strain Pm70).